A 233-amino-acid chain; its full sequence is uncharacterized protein (233 aa).

It belongs to the asfivirus H233R family.

This is an uncharacterized protein from African swine fever virus (strain Badajoz 1971 Vero-adapted) (Ba71V).